Reading from the N-terminus, the 249-residue chain is Very-long-chain (3R)-3-hydroxyacyl-CoA dehydratase 1 (249 aa).

The tract at residues 1-22 (MASSEEDGTNGGASEAGEEKEA) is disordered. The Cytoplasmic portion of the chain corresponds to 1-36 (MASSEEDGTNGGASEAGEEKEAPGRRRRLGLLATVW). Residues 37 to 56 (LTFYNIAMTAGWLVLAIAMV) traverse the membrane as a helical segment. The Lumenal segment spans residues 57–75 (RFYMEKGTHKGLYKSIQKT). Residues 76–92 (LKFFQTFALLEIVHCLI) form a helical membrane-spanning segment. Residues 93-102 (GIVPTSVIVA) lie on the Cytoplasmic side of the membrane. Residues 103-120 (GVQVSSRIFMVWLITHSI) form a helical membrane-spanning segment. The Lumenal portion of the chain corresponds to 121–126 (KPIQNE). A helical membrane pass occupies residues 127-141 (ESVVLFLVAWTVTEI). Over 142 to 164 (TRYSFYTFSLLDHLPYFIKWARY) the chain is Cytoplasmic. Residues 165–182 (NFFIILYPVGVVGELLTI) traverse the membrane as a helical segment. Active-site residues include tyrosine 171 and glutamate 178. Over 183–212 (YAALPYVKKTGMFSIRLPNKYNVSFDYYYF) the chain is Lumenal. N-linked (GlcNAc...) asparagine glycosylation is present at asparagine 204. The chain crosses the membrane as a helical span at residues 213 to 230 (LLITMASYIPLFPQLYFH). Over 231–249 (MLRQRRKVLHGEVIVEKDD) the chain is Cytoplasmic.

The protein belongs to the very long-chain fatty acids dehydratase HACD family. May interact with enzymes of the ELO family (including ELOVL1); with those enzymes that mediate condensation, the first of the four steps of the reaction cycle responsible for fatty acids elongation, may be part of a larger fatty acids elongase complex. Interacts with TECR. Skeletal muscle.

It localises to the endoplasmic reticulum membrane. The enzyme catalyses a very-long-chain (3R)-3-hydroxyacyl-CoA = a very-long-chain (2E)-enoyl-CoA + H2O. The catalysed reaction is (3R)-hydroxyhexadecanoyl-CoA = (2E)-hexadecenoyl-CoA + H2O. It catalyses the reaction (3R)-hydroxyoctadecanoyl-CoA = (2E)-octadecenoyl-CoA + H2O. It carries out the reaction (3R)-hydroxyeicosanoyl-CoA = (2E)-eicosenoyl-CoA + H2O. The enzyme catalyses (3R)-hydroxydocosanoyl-CoA = (2E)-docosenoyl-CoA + H2O. The catalysed reaction is (3R)-hydroxytetracosanoyl-CoA = (2E)-tetracosenoyl-CoA + H2O. It catalyses the reaction (3R)-hydroxyhexacosanoyl-CoA = (2E)-hexacosenoyl-CoA + H2O. It functions in the pathway lipid metabolism; fatty acid biosynthesis. Functionally, catalyzes the third of the four reactions of the long-chain fatty acids elongation cycle. This endoplasmic reticulum-bound enzymatic process, allows the addition of two carbons to the chain of long- and very long-chain fatty acids/VLCFAs per cycle. This enzyme catalyzes the dehydration of the 3-hydroxyacyl-CoA intermediate into trans-2,3-enoyl-CoA, within each cycle of fatty acid elongation. Thereby, it participates in the production of VLCFAs of different chain lengths that are involved in multiple biological processes as precursors of membrane lipids and lipid mediators. The protein is Very-long-chain (3R)-3-hydroxyacyl-CoA dehydratase 1 (HACD1) of Canis lupus familiaris (Dog).